Here is a 489-residue protein sequence, read N- to C-terminus: Male-specific lethal 1-like 1 (489 aa).

Disordered stretches follow at residues 126–164 and 224–311; these read PMVS…VRKG and VKKD…EDMQ. Residues 179-227 are a coiled coil; the sequence is LLLQLELIEQQQKHLHNKNKEIEDLKAEKEMLMARIERMEHRLQMVKKD. Residues 347–466 form the PEHE domain; the sequence is TVEVPSWRES…LKQQDFDLPW (120 aa). Residues 371–389 form an interaction with KAT8 HAT domain region; that stretch reads ECLDDSVFLKRHSKLELDE. A Bipartite nuclear localization signal motif is present at residues 380 to 394; it reads KRHSKLELDEKRRKR.

It belongs to the msl-1 family. As to quaternary structure, component of a multisubunit histone acetyltransferase complex (MSL). Interacts (via PEHE domain) with KAT8 (via HAT domain) and MSL3 (via MRG domain); both interactions are direct.

It is found in the nucleus. The protein localises to the nucleoplasm. Its subcellular location is the nucleus speckle. Its function is as follows. Component of histone acetyltransferase complex. Within MSL complex, promotes ubiquitination of histone H2B. In Danio rerio (Zebrafish), this protein is Male-specific lethal 1-like 1 (msl1l1).